Here is a 123-residue protein sequence, read N- to C-terminus: MAKPSYVKFEVPKELAEKALQAVEIARDTGKIRKGTNETTKAVERGQAKLVIIAEDVDPEEIVAHLPPLCEEKEIPYIYVPSKKELGAAAGIEVAAASVAIIEPGKARDLVEEIAMKVRELMK.

The protein belongs to the eukaryotic ribosomal protein eL8 family. As to quaternary structure, part of the 50S ribosomal subunit. Probably part of the RNase P complex.

The protein resides in the cytoplasm. In terms of biological role, multifunctional RNA-binding protein that recognizes the K-turn motif in ribosomal RNA, the RNA component of RNase P, box H/ACA, box C/D and box C'/D' sRNAs. The chain is Large ribosomal subunit protein eL8 from Pyrococcus abyssi (strain GE5 / Orsay).